Consider the following 174-residue polypeptide: FMN reductase (NADH) RutF (174 aa).

The protein belongs to the non-flavoprotein flavin reductase family. RutF subfamily.

The enzyme catalyses FMNH2 + NAD(+) = FMN + NADH + 2 H(+). Catalyzes the reduction of FMN to FMNH2 which is used to reduce pyrimidine by RutA via the Rut pathway. The polypeptide is FMN reductase (NADH) RutF (Agrobacterium fabrum (strain C58 / ATCC 33970) (Agrobacterium tumefaciens (strain C58))).